The primary structure comprises 200 residues: Nucleoside triphosphate pyrophosphatase (200 aa).

Catalysis depends on Asp-79, which acts as the Proton acceptor.

This sequence belongs to the Maf family. Requires a divalent metal cation as cofactor.

It is found in the cytoplasm. It carries out the reaction a ribonucleoside 5'-triphosphate + H2O = a ribonucleoside 5'-phosphate + diphosphate + H(+). It catalyses the reaction a 2'-deoxyribonucleoside 5'-triphosphate + H2O = a 2'-deoxyribonucleoside 5'-phosphate + diphosphate + H(+). Nucleoside triphosphate pyrophosphatase. May have a dual role in cell division arrest and in preventing the incorporation of modified nucleotides into cellular nucleic acids. In Legionella pneumophila subsp. pneumophila (strain Philadelphia 1 / ATCC 33152 / DSM 7513), this protein is Nucleoside triphosphate pyrophosphatase.